A 310-amino-acid polypeptide reads, in one-letter code: Putative S-adenosyl-L-methionine-dependent methyltransferase MSMEG_1888/MSMEI_1848 (310 aa).

S-adenosyl-L-methionine-binding positions include Asp-128 and 157 to 158 (DL).

This sequence belongs to the UPF0677 family.

Exhibits S-adenosyl-L-methionine-dependent methyltransferase activity. The sequence is that of Putative S-adenosyl-L-methionine-dependent methyltransferase MSMEG_1888/MSMEI_1848 from Mycolicibacterium smegmatis (strain ATCC 700084 / mc(2)155) (Mycobacterium smegmatis).